We begin with the raw amino-acid sequence, 756 residues long: MTENSVVEVDEGVFESTAVIDNGSFGTRTIRFETGRLAQQAAGAVVAYLDDETMLLSATSASKHPKEHFDFFPLTVDVEERMYAAGRIPGSFFRREGRPSTDAILTCRLIDRPLRPSFVDGLRNEIQVVVTVMSLNPQDLYDVVAINAASASTQIAGLPFSGPVGGVRVALIVSEDNKAGQWVAFPTVDQLENAVFDMVVAGRVVSGSGDNADVAIMMVEAEATDNVIAKIADGAQAPTEAIVAEGLEAAKPFIARLCAAQAALASKAAKPTGDYPVFPAYQDDVFAAVEAAASEKLNAALTIAGKQERDDKTDEVKVEVLEQVAPNFEGREKELGAAFRSLTKKLVRQRILRDQFRIDGRGVTDIRSLSAEVAIIPRAHGSALFERGETQILGVTTLDMVKMAQQVDSLGPETTKRYMHHYNFPPYSTGETGRVGSPKRREIGHGALAERALMPVLPSVEEFPYAIRQVSEALSSNGSTSMGSVCASTLALLNAGVPLRAPVAGIAMGLVSDQVDGETRYVALTDILGAEDAFGDMDFKVAGTKDFVTALQLDTKLDGIPSQVLAGALSQAKDARTTILEVMAEAIDTPDEMSPFAPRVTAIKVPVDKIGEVIGPKGKMINSITEQTGANISIEDDGTVFVGATDGPSAQAAIDMINAIANPQLPKVGERFLGTVVKTTAFGAFVSLLPGRDGLVHISKLGSGKRIAKVEDVVNVGSKIRVEIADIDARGKISLIPVEEGNDEAAAPAADEAASE.

Residues aspartate 532 and aspartate 538 each coordinate Mg(2+). One can recognise a KH domain in the interval 598 to 657; that stretch reads PRVTAIKVPVDKIGEVIGPKGKMINSITEQTGANISIEDDGTVFVGATDGPSAQAAIDMI. An S1 motif domain is found at 669 to 738; the sequence is GERFLGTVVK…ARGKISLIPV (70 aa).

Belongs to the polyribonucleotide nucleotidyltransferase family. Mg(2+) is required as a cofactor.

The protein resides in the cytoplasm. It catalyses the reaction RNA(n+1) + phosphate = RNA(n) + a ribonucleoside 5'-diphosphate. Functionally, involved in mRNA degradation. Catalyzes the phosphorolysis of single-stranded polyribonucleotides processively in the 3'- to 5'-direction. In Rhodococcus erythropolis (strain PR4 / NBRC 100887), this protein is Polyribonucleotide nucleotidyltransferase.